The following is a 108-amino-acid chain: Synaptic plasticity regulator PANTS (108 aa).

The disordered stretch occupies residues 58–108; it reads KNHSTQAKDSLQESERKRLADQRKFTPVWELRQKPPSDWHLPLNQGEPQDP. Positions 67–81 are enriched in basic and acidic residues; the sequence is SLQESERKRLADQRK.

This sequence belongs to the UPF0545 family. Post-translationally, rapidly degraded by proteolysis following neuronal stimulation, resulting in increased AMPA receptor clustering.

The protein localises to the synapse. It is found in the synaptic cleft. In terms of biological role, negatively regulates long-term potentiation and modulates adult synaptic plasticity. This is Synaptic plasticity regulator PANTS from Danio rerio (Zebrafish).